The sequence spans 391 residues: Pectate lyase B (391 aa).

Residues 1–30 (MKKTVRSLCSTALALTLGFTLLSGPASVQA) form the signal peptide. Ca(2+) contacts are provided by Asp-181, Asp-203, and Asp-207. Arg-305 is a catalytic residue.

It belongs to the polysaccharide lyase 1 family. Ca(2+) is required as a cofactor.

Its subcellular location is the secreted. The enzyme catalyses Eliminative cleavage of (1-&gt;4)-alpha-D-galacturonan to give oligosaccharides with 4-deoxy-alpha-D-galact-4-enuronosyl groups at their non-reducing ends.. It carries out the reaction Eliminative cleavage of (1-&gt;4)-alpha-D-galacturonan methyl ester to give oligosaccharides with 4-deoxy-6-O-methyl-alpha-D-galact-4-enuronosyl groups at their non-reducing ends.. It participates in glycan metabolism; pectin degradation. Functionally, catalyzes the depolymerization of both polygalacturonate and pectins of various methyl esterification degree, with an endo mode of action. Shows the highest activity on 20 to 34% methylated pectin but retains 67%, 51%, 25%, and 1% of its maximum activity on polygalacturonate and 8.5%, 55 to 70%, and 90% methylated pectin, respectively. The chain is Pectate lyase B from Paenibacillus amylolyticus.